Consider the following 269-residue polypeptide: Cytochrome c oxidase subunit 3 (269 aa).

7 helical membrane passes run 24–44 (FYNS…MHGF), 46–66 (NMYI…TLWF), 90–110 (GVGL…WTFF), 132–152 (IDPF…GVTV), 167–187 (ALYG…FQGI), 207–227 (FSTG…SVGL), and 247–267 (ILYW…IYFW).

This sequence belongs to the cytochrome c oxidase subunit 3 family. Component of the cytochrome c oxidase (complex IV, CIV), a multisubunit enzyme composed of a catalytic core of 3 subunits and several supernumerary subunits. The complex exists as a monomer or a dimer and forms supercomplexes (SCs) in the inner mitochondrial membrane with ubiquinol-cytochrome c oxidoreductase (cytochrome b-c1 complex, complex III, CIII).

It is found in the mitochondrion inner membrane. The enzyme catalyses 4 Fe(II)-[cytochrome c] + O2 + 8 H(+)(in) = 4 Fe(III)-[cytochrome c] + 2 H2O + 4 H(+)(out). Functionally, component of the cytochrome c oxidase, the last enzyme in the mitochondrial electron transport chain which drives oxidative phosphorylation. The respiratory chain contains 3 multisubunit complexes succinate dehydrogenase (complex II, CII), ubiquinol-cytochrome c oxidoreductase (cytochrome b-c1 complex, complex III, CIII) and cytochrome c oxidase (complex IV, CIV), that cooperate to transfer electrons derived from NADH and succinate to molecular oxygen, creating an electrochemical gradient over the inner membrane that drives transmembrane transport and the ATP synthase. Cytochrome c oxidase is the component of the respiratory chain that catalyzes the reduction of oxygen to water. Electrons originating from reduced cytochrome c in the intermembrane space (IMS) are transferred via the dinuclear copper A center (CU(A)) of subunit 2 and heme A of subunit 1 to the active site in subunit 1, a binuclear center (BNC) formed by heme A3 and copper B (CU(B)). The BNC reduces molecular oxygen to 2 water molecules using 4 electrons from cytochrome c in the IMS and 4 protons from the mitochondrial matrix. The polypeptide is Cytochrome c oxidase subunit 3 (COXIII) (Trichophyton rubrum (Athlete's foot fungus)).